A 70-amino-acid chain; its full sequence is DNA gyrase inhibitor YacG (70 aa).

Positions 9, 12, 28, and 32 each coordinate Zn(2+). Residues 43–70 (ESRKIPGSSIDPESIVTSNNKQDNVDEQ) are disordered.

The protein belongs to the DNA gyrase inhibitor YacG family. In terms of assembly, interacts with GyrB. Zn(2+) is required as a cofactor.

Functionally, inhibits all the catalytic activities of DNA gyrase by preventing its interaction with DNA. Acts by binding directly to the C-terminal domain of GyrB, which probably disrupts DNA binding by the gyrase. The chain is DNA gyrase inhibitor YacG from Legionella pneumophila (strain Lens).